A 470-amino-acid polypeptide reads, in one-letter code: Dynein axonemal assembly factor 11 (470 aa).

LRR repeat units lie at residues 20–43 (IFSLEEISLHQQDLERIEYIDKWC), 44–65 (RELKILYLQNNLIGKIENVSKL), 66–89 (KKLEYLNLALNNIEKIENLEGCES), and 90–110 (LQKLDLTVNFVGDLSSINSLQ). Residues 128 to 146 (YEGYRQYVVATLPQLKWLD) form the LRRCT domain. A coiled-coil region spans residues 177–288 (LRKRAAEREK…NRSEEELKKK (112 aa)). Residues 182-265 (AEREKATNNL…SQYTPESRLE (84 aa)) form a disordered region. Residues 194–213 (KQKEGRKAQEKKPGFDRRWY) are compositionally biased toward basic and acidic residues. The 93-residue stretch at 303–395 (VNESKLDFSL…TEMIQTKRAK (93 aa)) folds into the CS domain. The disordered stretch occupies residues 447-470 (HRNSARDTADSEDFIDNAEVPPLV).

The protein belongs to the tilB family.

Its subcellular location is the cytoplasm. It is found in the cell projection. The protein localises to the cilium. The protein resides in the dynein axonemal particle. It localises to the flagellum. Its function is as follows. Involved in dynein arm assembly, is important for expression and transporting outer dynein arm (ODA) proteins from the cytoplasm to the cilia. This chain is Dynein axonemal assembly factor 11 (dnaaf11), found in Xenopus tropicalis (Western clawed frog).